Reading from the N-terminus, the 46-residue chain is uncharacterized protein (46 aa).

The protein resides in the plastid. It localises to the chloroplast. This is an uncharacterized protein from Trieres chinensis (Marine centric diatom).